A 154-amino-acid polypeptide reads, in one-letter code: Deoxyuridine 5'-triphosphate nucleotidohydrolase (154 aa).

Residues 64–66 (RSG), N77, 81–83 (TID), and K91 contribute to the substrate site.

This sequence belongs to the dUTPase family. In terms of assembly, homotrimer. Requires Mg(2+) as cofactor.

The catalysed reaction is dUTP + H2O = dUMP + diphosphate + H(+). The protein operates within pyrimidine metabolism; dUMP biosynthesis; dUMP from dCTP (dUTP route): step 2/2. Its function is as follows. This enzyme is involved in nucleotide metabolism: it produces dUMP, the immediate precursor of thymidine nucleotides and it decreases the intracellular concentration of dUTP so that uracil cannot be incorporated into DNA. The polypeptide is Deoxyuridine 5'-triphosphate nucleotidohydrolase (Mycobacterium marinum (strain ATCC BAA-535 / M)).